The primary structure comprises 235 residues: Large ribosomal subunit protein uL1 (235 aa).

It belongs to the universal ribosomal protein uL1 family. In terms of assembly, part of the 50S ribosomal subunit.

Its function is as follows. Binds directly to 23S rRNA. The L1 stalk is quite mobile in the ribosome, and is involved in E site tRNA release. Functionally, protein L1 is also a translational repressor protein, it controls the translation of the L11 operon by binding to its mRNA. In Fervidobacterium nodosum (strain ATCC 35602 / DSM 5306 / Rt17-B1), this protein is Large ribosomal subunit protein uL1.